The primary structure comprises 439 residues: Exodeoxyribonuclease 7 large subunit (439 aa).

Belongs to the XseA family. As to quaternary structure, heterooligomer composed of large and small subunits.

It localises to the cytoplasm. The catalysed reaction is Exonucleolytic cleavage in either 5'- to 3'- or 3'- to 5'-direction to yield nucleoside 5'-phosphates.. Functionally, bidirectionally degrades single-stranded DNA into large acid-insoluble oligonucleotides, which are then degraded further into small acid-soluble oligonucleotides. This chain is Exodeoxyribonuclease 7 large subunit, found in Haemophilus influenzae (strain ATCC 51907 / DSM 11121 / KW20 / Rd).